The sequence spans 102 residues: ATP-dependent Clp protease adapter protein ClpS (102 aa).

The protein belongs to the ClpS family. In terms of assembly, binds to the N-terminal domain of the chaperone ClpA.

Its function is as follows. Involved in the modulation of the specificity of the ClpAP-mediated ATP-dependent protein degradation. This is ATP-dependent Clp protease adapter protein ClpS from Shewanella amazonensis (strain ATCC BAA-1098 / SB2B).